A 387-amino-acid polypeptide reads, in one-letter code: Formate-dependent phosphoribosylglycinamide formyltransferase (387 aa).

N(1)-(5-phospho-beta-D-ribosyl)glycinamide is bound by residues 15 to 16 (EL) and Glu75. Residues Arg106, Lys147, 152–157 (SSGKGQ), 187–190 (EEFI), and Glu195 each bind ATP. An ATP-grasp domain is found at 111-301 (DLASNELNIR…EFELHLRAVL (191 aa)). Positions 260 and 272 each coordinate Mg(2+). Residues Asp279, Lys349, and 356–357 (RR) contribute to the N(1)-(5-phospho-beta-D-ribosyl)glycinamide site.

It belongs to the PurK/PurT family. Homodimer.

The enzyme catalyses N(1)-(5-phospho-beta-D-ribosyl)glycinamide + formate + ATP = N(2)-formyl-N(1)-(5-phospho-beta-D-ribosyl)glycinamide + ADP + phosphate + H(+). It functions in the pathway purine metabolism; IMP biosynthesis via de novo pathway; N(2)-formyl-N(1)-(5-phospho-D-ribosyl)glycinamide from N(1)-(5-phospho-D-ribosyl)glycinamide (formate route): step 1/1. Functionally, involved in the de novo purine biosynthesis. Catalyzes the transfer of formate to 5-phospho-ribosyl-glycinamide (GAR), producing 5-phospho-ribosyl-N-formylglycinamide (FGAR). Formate is provided by PurU via hydrolysis of 10-formyl-tetrahydrofolate. This Prochlorococcus marinus (strain NATL1A) protein is Formate-dependent phosphoribosylglycinamide formyltransferase.